The sequence spans 310 residues: AMMECR1-like protein (310 aa).

The interval 26–92 (LSGSGTHSHG…SGALSPLPRP (67 aa)) is disordered. Composition is skewed to polar residues over residues 28-66 (GSGT…NVSD) and 74-84 (SPITRMNTASG). Serine 74 is subject to Phosphoserine. The AMMECR1 domain occupies 97 to 291 (NSTKNLVVTA…ISYAEYIASR (195 aa)).

This Mus musculus (Mouse) protein is AMMECR1-like protein (Ammecr1l).